A 56-amino-acid chain; its full sequence is Large ribosomal subunit protein bL32 (56 aa).

The segment at 1-21 (MAVQKNKPTRSKRGMRRSHDA) is disordered. Over residues 7 to 16 (KPTRSKRGMR) the composition is skewed to basic residues.

This sequence belongs to the bacterial ribosomal protein bL32 family.

The protein is Large ribosomal subunit protein bL32 of Hamiltonella defensa subsp. Acyrthosiphon pisum (strain 5AT).